The following is a 459-amino-acid chain: Alpha-N-acetylgalactosaminidase (459 aa).

A signal peptide (tat-type signal) is located at residues 1–31 (MHNIHRRHFLKAAGAVTAGLVTANIALNANA). Residues 64 to 65 (ER), aspartate 86, 135 to 138 (WEWH), 155 to 156 (EV), and asparagine 184 contribute to the NAD(+) site. Substrate is bound by residues tyrosine 213, arginine 232, 244–247 (YPTH), and tyrosine 326. Tyrosine 244 contacts NAD(+).

Belongs to the Gfo/Idh/MocA family. Glycosyl hydrolase 109 subfamily. NAD(+) is required as a cofactor. In terms of processing, predicted to be exported by the Tat system. The position of the signal peptide cleavage has not been experimentally proven.

It carries out the reaction Cleavage of non-reducing alpha-(1-&gt;3)-N-acetylgalactosamine residues from human blood group A and AB mucin glycoproteins, Forssman hapten and blood group A lacto series glycolipids.. Functionally, glycosidase that has specific alpha-N-acetylgalactosaminidase activity. This Shewanella oneidensis (strain ATCC 700550 / JCM 31522 / CIP 106686 / LMG 19005 / NCIMB 14063 / MR-1) protein is Alpha-N-acetylgalactosaminidase (nagA).